A 271-amino-acid polypeptide reads, in one-letter code: Phosphate import ATP-binding protein PstB 1 (271 aa).

One can recognise an ABC transporter domain in the interval Met24–Ile266. Gly56–Ser63 contributes to the ATP binding site.

This sequence belongs to the ABC transporter superfamily. Phosphate importer (TC 3.A.1.7) family. As to quaternary structure, the complex is composed of two ATP-binding proteins (PstB), two transmembrane proteins (PstC and PstA) and a solute-binding protein (PstS).

The protein resides in the cell inner membrane. It catalyses the reaction phosphate(out) + ATP + H2O = ADP + 2 phosphate(in) + H(+). In terms of biological role, part of the ABC transporter complex PstSACB involved in phosphate import. Responsible for energy coupling to the transport system. The sequence is that of Phosphate import ATP-binding protein PstB 1 from Rhizobium johnstonii (strain DSM 114642 / LMG 32736 / 3841) (Rhizobium leguminosarum bv. viciae).